The following is a 400-amino-acid chain: S-adenosylmethionine synthase (400 aa).

An ATP-binding site is contributed by 136–141 (GTGSTD).

It belongs to the AdoMet synthase 2 family. Mg(2+) serves as cofactor.

It catalyses the reaction L-methionine + ATP + H2O = S-adenosyl-L-methionine + phosphate + diphosphate. It participates in amino-acid biosynthesis; S-adenosyl-L-methionine biosynthesis; S-adenosyl-L-methionine from L-methionine: step 1/1. Its function is as follows. Catalyzes the formation of S-adenosylmethionine from methionine and ATP. The polypeptide is S-adenosylmethionine synthase (Methanospirillum hungatei JF-1 (strain ATCC 27890 / DSM 864 / NBRC 100397 / JF-1)).